A 222-amino-acid polypeptide reads, in one-letter code: Collectrin (222 aa).

Positions 1 to 14 are cleaved as a signal peptide; that stretch reads MLWALFFLVTTIHA. Residues 15–141 lie on the Extracellular side of the membrane; the sequence is ELCRPDAENA…LAPPMDPSVP (127 aa). The 202-residue stretch at 21–222 folds into the Collectrin-like domain; it reads AENAFKVRLS…LTEDERLTPL (202 aa). Residues Asn-76 and Asn-93 are each glycosylated (N-linked (GlcNAc...) asparagine). Residues 142–162 form a helical membrane-spanning segment; sequence VWIIVFGVIFCIVTVAIALLV. Over 163 to 222 the chain is Cytoplasmic; that stretch reads LSGIRQRRRNKKGPPGVEDAEDKCENIITIENGIPCDPLDMKGGHINDGFLTEDERLTPL. Phosphothreonine occurs at positions 214 and 220.

The protein belongs to the CLTRN family. As to quaternary structure, monomer. Homodimer; dimerization prevents CLTRN cleavage by BACE2. Interacts with SLC6A18; this interaction regulates the trafficking of SLC6A18 to the cell membrane and its amino acid transporter activity. Interacts with SLC6A19; this interaction regulates the trafficking of SLC6A19 to the cell membrane and its amino acid transporter activity. Interacts with SNAPIN. Post-translationally, glycosylated. Glycosylation is required for plasma membrane localization and for its cleavage by BACE2. Proteolytically processed in pancreatic beta cells by BACE2 leading to the generation and extracellular release of soluble CLTRN, and a corresponding cell-associated C-terminal fragment which is later cleaved by gamma-secretase. This shedding process inactivates CLTRN. Three cleavage sites have been identified for BACE2, two clustered sites after Phe-116 and Leu-118 and a more membrane proximal site at Phe-125; the preferred BACE2 cleavage site seems to be between Phe-125 and Leu-126, Phe-116 and Leu-118 act as alternative sites. In terms of tissue distribution, kidney; collecting ducts. Pancreas; beta cells of islets.

It localises to the cell membrane. Functionally, plays an important role in amino acid transport by acting as binding partner of amino acid transporters SLC6A18 and SLC6A19, regulating their trafficking on the cell surface and their activity. May also play a role in trafficking of amino acid transporters SLC3A1 and SLC7A9 to the renal cortical cell membrane. Regulator of SNARE complex function. Stimulator of beta cell replication. This chain is Collectrin, found in Rattus norvegicus (Rat).